A 256-amino-acid chain; its full sequence is Small ribosomal subunit protein eS1 (256 aa).

Ala-2 bears the N-acetylalanine; partial mark.

The protein belongs to the eukaryotic ribosomal protein eS1 family. In terms of assembly, component of the small ribosomal subunit. Mature ribosomes consist of a small (40S) and a large (60S) subunit. The 40S subunit contains about 33 different proteins and 1 molecule of RNA (18S). The 60S subunit contains about 49 different proteins and 3 molecules of RNA (25S, 5.8S and 5S).

Its subcellular location is the cytoplasm. The chain is Small ribosomal subunit protein eS1 from Candida tropicalis (strain ATCC MYA-3404 / T1) (Yeast).